Here is a 231-residue protein sequence, read N- to C-terminus: 5'-methylthioadenosine/S-adenosylhomocysteine nucleosidase (231 aa).

E12 serves as the catalytic Proton acceptor. Residues G78, V153, and 174–175 (ME) contribute to the substrate site. The active-site Proton donor is D198.

It belongs to the PNP/UDP phosphorylase family. MtnN subfamily.

The enzyme catalyses S-adenosyl-L-homocysteine + H2O = S-(5-deoxy-D-ribos-5-yl)-L-homocysteine + adenine. It catalyses the reaction S-methyl-5'-thioadenosine + H2O = 5-(methylsulfanyl)-D-ribose + adenine. The catalysed reaction is 5'-deoxyadenosine + H2O = 5-deoxy-D-ribose + adenine. It participates in amino-acid biosynthesis; L-methionine biosynthesis via salvage pathway; S-methyl-5-thio-alpha-D-ribose 1-phosphate from S-methyl-5'-thioadenosine (hydrolase route): step 1/2. In terms of biological role, catalyzes the irreversible cleavage of the glycosidic bond in both 5'-methylthioadenosine (MTA) and S-adenosylhomocysteine (SAH/AdoHcy) to adenine and the corresponding thioribose, 5'-methylthioribose and S-ribosylhomocysteine, respectively. Also cleaves 5'-deoxyadenosine, a toxic by-product of radical S-adenosylmethionine (SAM) enzymes, into 5-deoxyribose and adenine. The sequence is that of 5'-methylthioadenosine/S-adenosylhomocysteine nucleosidase from Vibrio vulnificus (strain CMCP6).